Consider the following 73-residue polypeptide: Conotoxin Leo-O2 (73 aa).

The signal sequence occupies residues 1–22 (MKLTCVLIIAVLFLTACQLVTA). Positions 23-47 (DYSGDEQQYRAMRLIDAMRNFGDTR) are excised as a propeptide. Intrachain disulfides connect cysteine 49/cysteine 59, cysteine 56/cysteine 64, and cysteine 58/cysteine 69.

Belongs to the conotoxin O1 superfamily. In terms of tissue distribution, expressed by the venom duct.

The protein resides in the secreted. This Conus leopardus (Leopard cone) protein is Conotoxin Leo-O2.